Consider the following 135-residue polypeptide: Crossover junction endodeoxyribonuclease Hje (135 aa).

Residues Glu10, Asp39, and Glu52 each coordinate Mg(2+).

This sequence belongs to the Holliday junction resolvase Hjc family. Hje subfamily. In terms of assembly, homodimer. Mg(2+) serves as cofactor.

It catalyses the reaction Endonucleolytic cleavage at a junction such as a reciprocal single-stranded crossover between two homologous DNA duplexes (Holliday junction).. A structure-specific endonuclease that resolves Holliday junction (HJ) intermediates during genetic recombination. Acts only on 4-way DNA junctions in a sequence non-specific manner; introduces paired nicks in opposing strands 2 bases 3' of the point of strand exchange only on continuous strands of 4-way junction DNA. Cleaves both mobile and immobile junctions. Plays a more direct role in DNA repair than Hjc. Overexpression of this protein decreases the growth rate, and leads to genomic instability, and global transcriptomic changes. The sequence is that of Crossover junction endodeoxyribonuclease Hje from Saccharolobus islandicus (strain REY15A) (Sulfolobus islandicus).